A 321-amino-acid polypeptide reads, in one-letter code: MEPGMEMNTASEGGTRRGPENKHEEKVQDPNRGEAETKAEMGNKTWADLAGEMKTFLWNPEERTCMGRTAKSWGLILLFYFIFYTCLAGMFAFCMYVMLLTLSPYTPTYRDRVSPPGVMIRPYLNGFTIAFNVSKPSTWQPYVDSMHQFLAAYDDKVQEEKNIECISGQYFIQGGNDSEEKKACQFKRSLLQNCSGIEDPTFGFSKGQPCILLKMNRIIGYRPGAGVPVNVDCKVQKGNESDLRSVDFYPGNGTFDLMYYPYYGKLTHVNYTSPLVAMHFTDVKRNSLVHIQCKLNGKGIINDVNSDRFLGRIIFTLSIGK.

Residues 1–41 (MEPGMEMNTASEGGTRRGPENKHEEKVQDPNRGEAETKAEM) form a disordered region. Residues 1 to 72 (MEPGMEMNTA…RTCMGRTAKS (72 aa)) are Cytoplasmic-facing. Over residues 14-41 (GTRRGPENKHEEKVQDPNRGEAETKAEM) the composition is skewed to basic and acidic residues. The chain crosses the membrane as a helical span at residues 73–93 (WGLILLFYFIFYTCLAGMFAF). Topologically, residues 94–321 (CMYVMLLTLS…RIIFTLSIGK (228 aa)) are extracellular. Residues Asn-132, Asn-176, and Asn-193 are each glycosylated (N-linked (GlcNAc...) asparagine). Cys-165 and Cys-184 are disulfide-bonded. 2 disulfide bridges follow: Cys-194/Cys-210 and Cys-233/Cys-293. Asn-239, Asn-252, and Asn-270 each carry an N-linked (GlcNAc...) asparagine glycan.

It belongs to the X(+)/potassium ATPases subunit beta family. Composed of two subunits: alpha (catalytic) and beta (accessory). Glycosylated. As to expression, expressed in skeletal muscle, intestine, heart, brain, retina, inner ear and skin.

Its subcellular location is the membrane. In terms of biological role, this is the non-catalytic component of the active enzyme, which catalyzes the hydrolysis of ATP coupled with the exchange of Na(+) and K(+) ions across the plasma membrane. The protein is Protein ATP1B4 (ATP1B4) of Gallus gallus (Chicken).